A 183-amino-acid chain; its full sequence is Endoribonuclease AbiQ (183 aa).

This sequence belongs to the ToxN/AbiQ toxin family. Forms a triangular heterohexamer with a single 35-nt-long repeat of RNA antitoxin AntiQ.

Its subcellular location is the cytoplasm. Its function is as follows. Toxic component of a type III toxin-antitoxin (TA) system. An endoribonuclease that is probably sequence-specific. It is neutralized by its cognate antitoxin RNA AntiQ, which has 2.8 35 nucleotide-long repeats. Cannot be cloned in L.lactis subsp. cremoris strain NZ9000 in the absence of the antitoxin gene; expression in strain NZ9000 even in the presence of antiQ inhibits growth in a bacteriostatic fashion. Confers resistance to 936 and c2 phages but not P335 phages in L.lactis, causes an abortive infection (Abi phenotype). Viral DNA is replicated but not cleaved from its concatemeric form, while the viral major structural protein is produced normally in the presence of this protein. Operon expression in E.coli confers resistance to 3 phages of the Myoviridae family (T4, RB69 and phage 2) and 1 of the Siphoviridae family (T5), but not other tested phages (T1, T3, lambda vir, HK97, Mu and pilH alpha). The presence of this operon in L.lactis subsp. lactis strain IL1403 during phage P008 infection alters the viral transcription profiles. The protein is Endoribonuclease AbiQ of Lactococcus lactis subsp. lactis (Streptococcus lactis).